Here is a 751-residue protein sequence, read N- to C-terminus: Protein CLMP1 (751 aa).

Positions 1–11 are enriched in basic residues; sequence MGKSGGRKKKS. The tract at residues 1–33 is disordered; it reads MGKSGGRKKKSGGSNSNSSQVNSSETSGLSKPS. A compositionally biased stretch (low complexity) spans 12–28; the sequence is GGSNSNSSQVNSSETSG. TPR repeat units follow at residues 51-84, 89-124, and 125-158; these read AHEL…IPKS, AVFH…QPGF, and TRAL…DPNH. One can recognise a PB1 domain in the interval 290-382; that stretch reads WRPLKFVYDH…GMLRLHVVDV (93 aa). A disordered region spans residues 386-443; it reads QEPMLLEEEEEEVEEKPVIEEVISSPTESLSETEINTEKTDKEVEKEKASSSEDPETK. Residues 390 to 399 are compositionally biased toward acidic residues; the sequence is LLEEEEEEVE. Over residues 409–419 the composition is skewed to polar residues; sequence SSPTESLSETE. Basic and acidic residues predominate over residues 421–443; that stretch reads NTEKTDKEVEKEKASSSEDPETK. TPR repeat units follow at residues 434–468, 481–514, and 536–570; these read ASSS…DPDA, SEAL…AFFN, and EVVA…KPDF. A compositionally biased stretch (basic and acidic residues) spans 630–648; it reads EQRMDDLKNPNSNKKEEVS. Residues 630 to 663 form a disordered region; that stretch reads EQRMDDLKNPNSNKKEEVSKRRKKQGGDGNEEVS.

Interacts with myosin XI-K. Expressed in roots, stems, leaves, apex, flowers and seeds. Detected throughout the petiole in juvenile and young leaves, but restricted to the petiole midvein in older leaves. Expressed in hydathodes, at the base of the trichome, in the vascular cylinder of primary root and lateral root, in emerging lateral root primordia, in pollen and in developing embryos, but not in mature embryos.

It localises to the cytoplasm. Its function is as follows. Required for plastid separation and partitioning during cell division. Not involved in plastid constriction or in the organization of cytoplasmic actin cables. Contributes to polar growth of root hairs. The protein is Protein CLMP1 of Arabidopsis thaliana (Mouse-ear cress).